Reading from the N-terminus, the 580-residue chain is Cleavage stimulation factor subunit 2 (580 aa).

Position 14 is a phosphoserine (Ser14). The 79-residue stretch at 16–94 folds into the RRM domain; that stretch reads RSVFVGNIPY…RALRVDNAAS (79 aa). The segment at 108–248 is interactions with CSTF3 and SYMPK; it reads APVIESPYGE…VNGAPPMMQA (141 aa). Residue Lys189 forms a Glycyl lysine isopeptide (Lys-Gly) (interchain with G-Cter in SUMO2) linkage. Residue Arg308 is modified to Omega-N-methylarginine. 2 disordered regions span residues 311–331 and 347–414; these read LPTNVPTPRGLLGDAPNDPRG and LGPP…RGLD. Composition is skewed to basic and acidic residues over residues 363–376 and 405–414; these read PGHEGRGPPPHDMR and RGGRDPRGLD. A 1; approximate repeat occupies 413–417; sequence LDARG. Positions 413–472 are 12 X 5 AA tandem repeats of M-E-A-R-[AG]; the sequence is LDARGMEARAMEARGLDARGLEARAMEARAMEARAMEARAMEARAMEARAMEARGMDTRG. 2 consecutive repeat copies span residues 418–422 and 423–427. A 4; approximate repeat occupies 428–432; that stretch reads LDARG. The stretch at 433–437 is one 5; approximate repeat; that stretch reads LEARA. 6 tandem repeats follow at residues 438–442, 443–447, 448–452, 453–457, 458–462, and 463–467. The 12; approximate repeat unit spans residues 468 to 472; sequence MDTRG. Arg471 and Arg478 each carry omega-N-methylarginine. The tract at residues 512 to 536 is disordered; the sequence is MQGASMQGGSQPGGFSPGQSQVTPQ. The segment at 517 to 580 is interaction with RPO2TC1; the sequence is MQGGSQPGGF…EQIQKSTGAP (64 aa). Phosphoserine occurs at positions 521 and 527.

The CSTF complex is composed of CSTF1 (50 kDa subunit), CSTF2 (64 kDa subunit) and CSTF3 (77 kDa subunit). CSTF2 directly interacts with CSTF3, SYMPK and RPO2TC1. Interacts with HSF1 in heat-stressed cells. Interacts with CPSF2, CPSF3 and FIP1L1. Interacts with DDX1. As to expression, expressed in most somatic cell types (at protein level). Highly expressed in testis, except in meiotic spermatocytes.

The protein localises to the nucleus. Functionally, one of the multiple factors required for polyadenylation and 3'-end cleavage of mammalian pre-mRNAs. This subunit is directly involved in the binding to pre-mRNAs. This Mus musculus (Mouse) protein is Cleavage stimulation factor subunit 2 (Cstf2).